The primary structure comprises 761 residues: MPGIDKTDRAMTSVTAQEALDFHSQGRPGKLEISPTKPMATQRDLSLAYSPGVAVPVKAIADDPATAYDYTARGNMVAVISNGTAILGLGNLGALASKPVMEGKAVLFKRFADVDSIDLEVDTENVDEFVNCVRFLGPSFGGINLEDIKAPDCFIIEQRLREVMDIPVFHDDQHGTAIIAAAGLVNALTLTGRDFKTAKLVCNGAGAAAIACIELIKAMGFNPENIILCDTKGVIYKGRTDGMNQWKSAHAVETDRRTLAEALDGADVFFGLSAKGALSADMVRSMGARPIIFAMANPDPEITPEEVALIRDDAIVATGRSDYPNQVNNVLGFPYIFRGALDVRASTINDAMKIAAAEALANLAKEDVPDDVAAAYQGNRPRFGPQYIIPVPFDPRLISAIPMAVAKAAMETGVARKPIEDLKAYGQQLSARRDPIASTLQRIVERVRRQPKRIVFAEGEEVQMMRSAIAYANQQLGTALLLGREEVMRETAEREGIDLDRAGIQIVNARLSKRVGAYTDFLYSRLQRKGYLFRDVQRLINTDRNHFAASMVALGDADGMVTGLTRNYSTALEDVRRCIDPKPGHRVIGVSIALCRGRTVLVADTAVHDMPTSEELADIAEEAAGLAKRLGYVPRVAMLAYSTFGHPSGERSERVREAVKILDRRRVDFEYDGEMAADVALNARVMEQYPFCRLSGTANVLVMPAFHSASISTKMLQELGGSTVIGPLLVGLDKSVQIASMSAKDSDLVNLAAIAAYNAGT.

Residues 1–437 (MPGIDKTDRA…QLSARRDPIA (437 aa)) are malic enzyme. Tyr49 (proton donor) is an active-site residue. Lys104 (proton acceptor) is an active-site residue. A divalent metal cation-binding residues include Glu146, Asp147, and Asp172. Residues 205–208 (AGAA), Asn297, and Asn329 contribute to the NADP(+) site. The phosphate acetyltransferase stretch occupies residues 438-761 (STLQRIVERV…AAIAAYNAGT (324 aa)).

In the N-terminal section; belongs to the malic enzymes family. The protein in the C-terminal section; belongs to the phosphate acetyltransferase and butyryltransferase family. Homooctamer. Mg(2+) serves as cofactor. Requires Mn(2+) as cofactor.

The enzyme catalyses (S)-malate + NADP(+) = pyruvate + CO2 + NADPH. It catalyses the reaction oxaloacetate + H(+) = pyruvate + CO2. This Rhizobium meliloti (strain 1021) (Ensifer meliloti) protein is NADP-dependent malic enzyme (tme).